The following is a 279-amino-acid chain: Shikimate dehydrogenase (NADP(+)) (279 aa).

Shikimate contacts are provided by residues 21–23 (SRS) and T68. The active-site Proton acceptor is the K72. D83 serves as a coordination point for NADP(+). Residues N92 and D107 each contribute to the shikimate site. NADP(+) is bound by residues 132–136 (GAGGA), 156–161 (NRTVER), and L221. Y223 is a shikimate binding site. G244 contributes to the NADP(+) binding site.

Belongs to the shikimate dehydrogenase family. Homodimer.

It carries out the reaction shikimate + NADP(+) = 3-dehydroshikimate + NADPH + H(+). It functions in the pathway metabolic intermediate biosynthesis; chorismate biosynthesis; chorismate from D-erythrose 4-phosphate and phosphoenolpyruvate: step 4/7. In terms of biological role, involved in the biosynthesis of the chorismate, which leads to the biosynthesis of aromatic amino acids. Catalyzes the reversible NADPH linked reduction of 3-dehydroshikimate (DHSA) to yield shikimate (SA). The polypeptide is Shikimate dehydrogenase (NADP(+)) (Nitrobacter winogradskyi (strain ATCC 25391 / DSM 10237 / CIP 104748 / NCIMB 11846 / Nb-255)).